The primary structure comprises 87 residues: Putative defensin-like protein 231 (87 aa).

The first 26 residues, 1 to 26, serve as a signal peptide directing secretion; sequence MKFATCFLVSYVLVFLVLSVCKEVEA. 4 cysteine pairs are disulfide-bonded: Cys-30-Cys-85, Cys-40-Cys-66, Cys-48-Cys-79, and Cys-64-Cys-81.

It belongs to the DEFL family.

It is found in the secreted. This chain is Putative defensin-like protein 231 (SCRL25), found in Arabidopsis thaliana (Mouse-ear cress).